The primary structure comprises 151 residues: Histone H2A.2.1 (151 aa).

N-acetylmethionine is present on M1. 2 disordered regions span residues 1 to 22 and 129 to 151; these read MDGS…KKSV and EKAE…PKKA. 2 consecutive short sequence motifs (SPKK motif) follow at residues 140-143 and 147-150; these read SPKK. Basic residues predominate over residues 140-151; sequence SPKKTTKSPKKA.

The protein belongs to the histone H2A family. The nucleosome is a histone octamer containing two molecules each of H2A, H2B, H3 and H4 assembled in one H3-H4 heterotetramer and two H2A-H2B heterodimers. The octamer wraps approximately 147 bp of DNA. In terms of processing, phosphorylated within its C-terminal part, probably at the SPKK motifs.

The protein resides in the nucleus. The protein localises to the chromosome. In terms of biological role, core component of nucleosome. Nucleosomes wrap and compact DNA into chromatin, limiting DNA accessibility to the cellular machineries which require DNA as a template. Histones thereby play a central role in transcription regulation, DNA repair, DNA replication and chromosomal stability. DNA accessibility is regulated via a complex set of post-translational modifications of histones, also called histone code, and nucleosome remodeling. This is Histone H2A.2.1 from Triticum aestivum (Wheat).